A 530-amino-acid polypeptide reads, in one-letter code: Glutamate--cysteine ligase (530 aa).

Belongs to the glutamate--cysteine ligase type 1 family. Type 1 subfamily.

The catalysed reaction is L-cysteine + L-glutamate + ATP = gamma-L-glutamyl-L-cysteine + ADP + phosphate + H(+). Its pathway is sulfur metabolism; glutathione biosynthesis; glutathione from L-cysteine and L-glutamate: step 1/2. The protein is Glutamate--cysteine ligase of Pseudomonas entomophila (strain L48).